Consider the following 546-residue polypeptide: Capsid protein VP1 (546 aa).

Residues 1–38 (MMMASKDAPQSADGASGAGQLVPEVNTADPLPMEPVAG) form a disordered region. Residues 1 to 226 (MMMASKDAPQ…FLFLVPPTIE (226 aa)) form a shell domain region. The tract at residues 227 to 279 (QKTRAFTVPNIPLQTLSNSRFPSLIQGMILSPDASQVVQFQNGRCLIDGQLLG) is P1 sub-domain 1. The tract at residues 227 to 545 (QKTRAFTVPN…TARGRLGVRR (319 aa)) is protruding domain. Positions 280-416 (TTPATSGQLF…GSSLSQAANL (137 aa)) are P2 sub-domain. A P1 sub-domain 2 region spans residues 417 to 546 (APPVFPPGFG…ARGRLGVRRI (130 aa)). Residues 538 to 545 (RGRLGVRR) are plays a role in binding to host histo-blood group structures antigens and in the formation of P-particles.

The protein belongs to the caliciviridae capsid protein family. As to quaternary structure, homodimer. Homomultimer. Interacts with the minor capsid protein VP2. Interacts (via C-terminus) with host type I histo-blood group structures antigens at the surface of target cells. In terms of processing, may be cleaved by host protease to generate soluble capsid protein. Assembled capsid cannot be cleaved.

The protein resides in the virion. Its subcellular location is the host cytoplasm. Functionally, capsid protein self assembles to form an icosahedral capsid with a T=3 symmetry, about 38 nm in diameter, and consisting of 180 capsid proteins. A smaller form of capsid with a diameter of 23 nm might be capsid proteins assembled as icosahedron with T=1 symmetry. The capsid encapsulates the genomic RNA and is decorated with VP2 proteins. Attaches virion to target cells by binding histo-blood group antigens (HBGAs) present on gastroduodenal epithelial cells. The soluble capsid protein may play a role in viral immunoevasion. This is Capsid protein VP1 from Southampton virus (strain GI/Human/United Kingdom/Southampton/1991) (SHV).